Here is a 126-residue protein sequence, read N- to C-terminus: Histone H2B type 2-B (126 aa).

Low complexity predominate over residues 1 to 12 (MPDPAKSAPAPK). The disordered stretch occupies residues 1-36 (MPDPAKSAPAPKKGSKKAVTKVQKKDGKKRKRSRKE). An N-acetylproline modification is found at Pro2. Residue Lys6 is modified to N6-(2-hydroxyisobutyryl)lysine; alternate. Lys6 is subject to N6-(beta-hydroxybutyryl)lysine; alternate. At Lys6 the chain carries N6-acetyllysine; alternate. Lys6 carries the N6-butyryllysine; alternate modification. Position 6 is an N6-crotonyllysine; alternate (Lys6). N6-lactoyllysine; alternate is present on Lys6. Residue Lys6 forms a Glycyl lysine isopeptide (Lys-Gly) (interchain with G-Cter in SUMO2); alternate linkage. Ser7 bears the ADP-ribosylserine mark. Lys12 carries the post-translational modification N6-(beta-hydroxybutyryl)lysine; alternate. Residues Lys12 and Lys13 each carry the N6-acetyllysine; alternate modification. Residues Lys12 and Lys13 each carry the N6-crotonyllysine; alternate modification. Lys12 carries the N6-lactoyllysine; alternate modification. Lys13 carries the N6-(2-hydroxyisobutyryl)lysine; alternate modification. The residue at position 15 (Ser15) is a Phosphoserine; by STK4/MST1. Lys16, Lys17, Lys21, and Lys24 each carry N6-acetyllysine; alternate. N6-crotonyllysine; alternate is present on residues Lys16, Lys17, Lys21, and Lys24. N6-lactoyllysine; alternate occurs at positions 16, 17, 21, and 24. Lys17 is subject to N6-glutaryllysine; alternate. An N6-(2-hydroxyisobutyryl)lysine; alternate mark is found at Lys21 and Lys24. Residue Lys21 is modified to N6-(beta-hydroxybutyryl)lysine; alternate. An N6-butyryllysine; alternate modification is found at Lys21. Lys21 participates in a covalent cross-link: Glycyl lysine isopeptide (Lys-Gly) (interchain with G-Cter in SUMO2); alternate. At Lys25 the chain carries N6-(2-hydroxyisobutyryl)lysine. Lys35 is modified (N6-(2-hydroxyisobutyryl)lysine; alternate). Residue Lys35 is modified to N6-(beta-hydroxybutyryl)lysine; alternate. Position 35 is an N6-crotonyllysine; alternate (Lys35). The residue at position 35 (Lys35) is an N6-glutaryllysine; alternate. At Lys35 the chain carries N6-succinyllysine; alternate. Residue Lys35 forms a Glycyl lysine isopeptide (Lys-Gly) (interchain with G-Cter in ubiquitin); alternate linkage. Glu36 carries the post-translational modification PolyADP-ribosyl glutamic acid. Ser37 bears the Phosphoserine; by AMPK mark. N6-(2-hydroxyisobutyryl)lysine; alternate occurs at positions 44, 47, and 58. Lys44 is modified (N6-lactoyllysine; alternate). 2 positions are modified to N6-glutaryllysine; alternate: Lys44 and Lys47. N6-methyllysine; alternate is present on Lys47. The residue at position 58 (Lys58) is an N6,N6-dimethyllysine; alternate. Dimethylated arginine is present on Arg80. N6-(2-hydroxyisobutyryl)lysine; alternate is present on Lys86. Lys86 carries the N6-acetyllysine; alternate modification. Lys86 carries the N6-lactoyllysine; alternate modification. Lys86 carries the post-translational modification N6,N6,N6-trimethyllysine; alternate. Arg87 and Arg93 each carry omega-N-methylarginine. N6-(2-hydroxyisobutyryl)lysine; alternate is present on Lys109. Residue Lys109 is modified to N6-(beta-hydroxybutyryl)lysine; alternate. The residue at position 109 (Lys109) is an N6-lactoyllysine; alternate. Residue Lys109 is modified to N6-glutaryllysine; alternate. An N6-methyllysine; alternate modification is found at Lys109. The O-linked (GlcNAc) serine glycan is linked to Ser113. Thr116 is modified (phosphothreonine). Residues Lys117 and Lys121 each carry the N6-(2-hydroxyisobutyryl)lysine; alternate modification. At Lys117 the chain carries N6-(beta-hydroxybutyryl)lysine; alternate. An N6-lactoyllysine; alternate mark is found at Lys117 and Lys121. An N6-glutaryllysine; alternate mark is found at Lys117 and Lys121. N6-succinyllysine; alternate is present on residues Lys117 and Lys121. Lys117 carries the N6-methylated lysine; alternate modification. Residue Lys121 forms a Glycyl lysine isopeptide (Lys-Gly) (interchain with G-Cter in ubiquitin); alternate linkage.

Belongs to the histone H2B family. The nucleosome is a histone octamer containing two molecules each of H2A, H2B, H3 and H4 assembled in one H3-H4 heterotetramer and two H2A-H2B heterodimers. The octamer wraps approximately 147 bp of DNA. In terms of processing, monoubiquitination at Lys-35 (H2BK34Ub) by the MSL1/MSL2 dimer is required for histone H3 'Lys-4' (H3K4me) and 'Lys-79' (H3K79me) methylation and transcription activation at specific gene loci, such as HOXA9 and MEIS1 loci. Similarly, monoubiquitination at Lys-121 (H2BK120Ub) by the RNF20/40 complex gives a specific tag for epigenetic transcriptional activation and is also prerequisite for histone H3 'Lys-4' and 'Lys-79' methylation. It also functions cooperatively with the FACT dimer to stimulate elongation by RNA polymerase II. H2BK120Ub also acts as a regulator of mRNA splicing: deubiquitination by USP49 is required for efficient cotranscriptional splicing of a large set of exons. Phosphorylated on Ser-15 (H2BS14ph) by STK4/MST1 during apoptosis; which facilitates apoptotic chromatin condensation. Also phosphorylated on Ser-15 in response to DNA double strand breaks (DSBs), and in correlation with somatic hypermutation and immunoglobulin class-switch recombination. Phosphorylation at Ser-37 (H2BS36ph) by AMPK in response to stress promotes transcription. Post-translationally, glcNAcylation at Ser-113 promotes monoubiquitination of Lys-121. It fluctuates in response to extracellular glucose, and associates with transcribed genes. In terms of processing, ADP-ribosylated by PARP1 or PARP2 on Ser-7 (H2BS6ADPr) in response to DNA damage. H2BS6ADPr promotes recruitment of CHD1L. Poly ADP-ribosylation on Glu-36 (H2BE35ADPr) by PARP1 regulates adipogenesis: it inhibits phosphorylation at Ser-37 (H2BS36ph), thereby blocking expression of pro-adipogenetic genes. Crotonylation (Kcr) is specifically present in male germ cells and marks testis-specific genes in post-meiotic cells, including X-linked genes that escape sex chromosome inactivation in haploid cells. Crotonylation marks active promoters and enhancers and confers resistance to transcriptional repressors. It is also associated with post-meiotically activated genes on autosomes. Post-translationally, hydroxybutyrylation of histones is induced by starvation. In terms of processing, lactylated in macrophages by EP300/P300 by using lactoyl-CoA directly derived from endogenous or exogenous lactate, leading to stimulates gene transcription.

The protein localises to the nucleus. It localises to the chromosome. Core component of nucleosome. Nucleosomes wrap and compact DNA into chromatin, limiting DNA accessibility to the cellular machineries which require DNA as a template. Histones thereby play a central role in transcription regulation, DNA repair, DNA replication and chromosomal stability. DNA accessibility is regulated via a complex set of post-translational modifications of histones, also called histone code, and nucleosome remodeling. The protein is Histone H2B type 2-B of Mus musculus (Mouse).